A 490-amino-acid chain; its full sequence is ATP synthase subunit beta, chloroplastic (490 aa).

170–177 (GGAGVGKT) serves as a coordination point for ATP.

Belongs to the ATPase alpha/beta chains family. In terms of assembly, F-type ATPases have 2 components, CF(1) - the catalytic core - and CF(0) - the membrane proton channel. CF(1) has five subunits: alpha(3), beta(3), gamma(1), delta(1), epsilon(1). CF(0) has four main subunits: a(1), b(1), b'(1) and c(9-12).

It is found in the plastid. Its subcellular location is the chloroplast thylakoid membrane. It catalyses the reaction ATP + H2O + 4 H(+)(in) = ADP + phosphate + 5 H(+)(out). Produces ATP from ADP in the presence of a proton gradient across the membrane. The catalytic sites are hosted primarily by the beta subunits. In Ipomoea aquatica (Water spinach), this protein is ATP synthase subunit beta, chloroplastic.